A 193-amino-acid polypeptide reads, in one-letter code: Superoxide dismutase [Fe] (193 aa).

His-27 is a binding site for Fe cation. Lys-51 carries the N6-acetyllysine modification. 3 residues coordinate Fe cation: His-74, Asp-157, and His-161.

The protein belongs to the iron/manganese superoxide dismutase family. In terms of assembly, homodimer. Fe cation serves as cofactor.

The enzyme catalyses 2 superoxide + 2 H(+) = H2O2 + O2. Its function is as follows. Destroys superoxide anion radicals which are normally produced within the cells and which are toxic to biological systems. The polypeptide is Superoxide dismutase [Fe] (sodB) (Escherichia coli O157:H7).